Consider the following 450-residue polypeptide: MGKYFGTDGVRGEANVELTPELAFKLGRFGGYVLSQHESEVPKVFVGRDTRISGEMLESALIAGLLSVGIHVYKLGVIATPGVAYLVKSEKASAGVMISASHNPALDNGIKFFGGDGYKLDDDRELEIEALLDATEDTLPRPSAEGLGTLVDYPEGLRKYQQYLVSTGLELEGMHVALDTANGAASTSARQIFADLGAQLTVIGENPDGLNINLNVGSTHPEALQEVVRESGAAIGLAFDGDSDRLIAVDENGELVDGDKIMYIIGKYLSEKGQLAQNTIVTTVMSNLGFHKALDREGIQKAVTAVGDRYVVEEMRQSGYNLGGEQSGHVIIMDYNTTGDGQLTAVQLTKIMKETGKKLSELASEVTIYPQKLVNIRVENSMKDKAMEVPAIKSIIEEMEAKMAGNGRILVRPSGTEPLLRVMAEAPSHEEVDFYVDTIADVVRAEIGIE.

The active-site Phosphoserine intermediate is the Ser101. The Mg(2+) site is built by Ser101, Asp240, Asp242, and Asp244. Ser101 bears the Phosphoserine mark.

This sequence belongs to the phosphohexose mutase family. Mg(2+) serves as cofactor. Activated by phosphorylation.

It carries out the reaction alpha-D-glucosamine 1-phosphate = D-glucosamine 6-phosphate. In terms of biological role, catalyzes the conversion of glucosamine-6-phosphate to glucosamine-1-phosphate. This is Phosphoglucosamine mutase from Streptococcus gordonii (strain Challis / ATCC 35105 / BCRC 15272 / CH1 / DL1 / V288).